The chain runs to 332 residues: Formamidase (332 aa).

Residues Phe-14–Pro-259 form the CN hydrolase domain. The active-site Proton acceptor is the Glu-60. The active-site Proton donor is Lys-132. The Nucleophile role is filled by Cys-165.

Belongs to the carbon-nitrogen hydrolase superfamily. Aliphatic amidase family.

The enzyme catalyses formamide + H2O = formate + NH4(+). Is an aliphatic amidase with a restricted substrate specificity, as it only hydrolyzes formamide. The chain is Formamidase from Bacillus thuringiensis (strain Al Hakam).